We begin with the raw amino-acid sequence, 298 residues long: 4-diphosphocytidyl-2-C-methyl-D-erythritol kinase (298 aa).

The active site involves Lys15. 102–112 contributes to the ATP binding site; that stretch reads PVAAGIGGGSS. Asp142 is a catalytic residue.

The protein belongs to the GHMP kinase family. IspE subfamily.

It catalyses the reaction 4-CDP-2-C-methyl-D-erythritol + ATP = 4-CDP-2-C-methyl-D-erythritol 2-phosphate + ADP + H(+). Its pathway is isoprenoid biosynthesis; isopentenyl diphosphate biosynthesis via DXP pathway; isopentenyl diphosphate from 1-deoxy-D-xylulose 5-phosphate: step 3/6. Its function is as follows. Catalyzes the phosphorylation of the position 2 hydroxy group of 4-diphosphocytidyl-2C-methyl-D-erythritol. The polypeptide is 4-diphosphocytidyl-2-C-methyl-D-erythritol kinase (Hyphomonas neptunium (strain ATCC 15444)).